The chain runs to 721 residues: Polyphosphate kinase (721 aa).

Asn-54 lines the ATP pocket. Arg-379 and Arg-409 together coordinate Mg(2+). The 35-residue stretch at 434–468 (THLKTHSKIALVVKRIGGELTSFVHLGTGNYNDKT) folds into the PLD phosphodiesterase domain. His-439 functions as the Phosphohistidine intermediate in the catalytic mechanism. Tyr-472, Arg-568, and His-596 together coordinate ATP.

This sequence belongs to the polyphosphate kinase 1 (PPK1) family. Mg(2+) serves as cofactor. In terms of processing, an intermediate of this reaction is the autophosphorylated ppk in which a phosphate is covalently linked to a histidine residue through a N-P bond.

The catalysed reaction is [phosphate](n) + ATP = [phosphate](n+1) + ADP. Catalyzes the reversible transfer of the terminal phosphate of ATP to form a long-chain polyphosphate (polyP). The protein is Polyphosphate kinase of Staphylococcus haemolyticus (strain JCSC1435).